A 289-amino-acid polypeptide reads, in one-letter code: uncharacterized protein (289 aa).

The first 19 residues, 1–19, serve as a signal peptide directing secretion; that stretch reads MAKWLGAPLARGVSTATRA. The next 2 helical transmembrane spans lie at 90 to 110 and 257 to 277; these read GLLA…GWGV and AALS…LVFA.

It is found in the cell membrane. This is an uncharacterized protein from Mycobacterium tuberculosis (strain CDC 1551 / Oshkosh).